The following is a 74-amino-acid chain: UPF0352 protein MS1910 (74 aa).

This sequence belongs to the UPF0352 family.

In Mannheimia succiniciproducens (strain KCTC 0769BP / MBEL55E), this protein is UPF0352 protein MS1910.